Reading from the N-terminus, the 429-residue chain is 3-phosphoshikimate 1-carboxyvinyltransferase (429 aa).

3-phosphoshikimate is bound by residues K22, S23, and R27. Residue K22 participates in phosphoenolpyruvate binding. G94 and R122 together coordinate phosphoenolpyruvate. The 3-phosphoshikimate site is built by S167, Q169, D315, and K342. Q169 is a binding site for phosphoenolpyruvate. The active-site Proton acceptor is the D315. Phosphoenolpyruvate contacts are provided by R346 and R388.

It belongs to the EPSP synthase family. Monomer.

Its subcellular location is the cytoplasm. It carries out the reaction 3-phosphoshikimate + phosphoenolpyruvate = 5-O-(1-carboxyvinyl)-3-phosphoshikimate + phosphate. It functions in the pathway metabolic intermediate biosynthesis; chorismate biosynthesis; chorismate from D-erythrose 4-phosphate and phosphoenolpyruvate: step 6/7. Catalyzes the transfer of the enolpyruvyl moiety of phosphoenolpyruvate (PEP) to the 5-hydroxyl of shikimate-3-phosphate (S3P) to produce enolpyruvyl shikimate-3-phosphate and inorganic phosphate. The polypeptide is 3-phosphoshikimate 1-carboxyvinyltransferase (Citrifermentans bemidjiense (strain ATCC BAA-1014 / DSM 16622 / JCM 12645 / Bem) (Geobacter bemidjiensis)).